We begin with the raw amino-acid sequence, 513 residues long: Flavonoid 3'-monooxygenase (513 aa).

Residues 1–21 (MATLFLTILLATVLFLILRIF) traverse the membrane as a helical segment. Residues 22–513 (SHRRNRSHNN…APNVYGLGSG (492 aa)) are Cytoplasmic-facing. Cysteine 445 provides a ligand contact to heme.

The protein belongs to the cytochrome P450 family. The cofactor is heme. In terms of tissue distribution, high expression in siliques and to a lower extent in stems, flowers and senescing leaves.

The protein localises to the endoplasmic reticulum membrane. It carries out the reaction a 3'-unsubstituted flavone + reduced [NADPH--hemoprotein reductase] + O2 = a 3'-hydroxyflavone + oxidized [NADPH--hemoprotein reductase] + H2O + H(+). It functions in the pathway secondary metabolite biosynthesis; flavonoid biosynthesis. Catalyzes the 3'-hydroxylation of the flavonoid B-ring to the 3',4'-hydroxylated state. Convert naringenin to eriodictyol and dihydrokaempferol to dihydroquercetin. The protein is Flavonoid 3'-monooxygenase (CYP75B1) of Arabidopsis thaliana (Mouse-ear cress).